A 435-amino-acid polypeptide reads, in one-letter code: Protein GOLM2 (435 aa).

Met-1 carries the post-translational modification N-acetylmethionine. The Cytoplasmic portion of the chain corresponds to 1-14 (MVGFGANRRAGRLP). Residues 15–35 (SFVLVVLLVVIVVLAFNYWSI) traverse the membrane as a helical; Signal-anchor for type II membrane protein segment. Residues 35 to 194 (ISSRHVLLQE…DQFLQEQKET (160 aa)) adopt a coiled-coil conformation. Over 36 to 435 (SSRHVLLQEE…YGKQRFSDVL (400 aa)) the chain is Lumenal. 2 stretches are compositionally biased toward basic and acidic residues: residues 191–212 (QKETHKIQSNDGKELGRNDHGA) and 223–239 (DANKNEDPSSNHLPHGK). Disordered stretches follow at residues 191-239 (QKET…PHGK) and 271-435 (PPVL…SDVL). A Phosphoserine modification is found at Ser-232. Polar residues-rich tracts occupy residues 282–294 (QTISHLPTGQPLS) and 302–320 (HLNQNENPSTSKQNPSNPL). The segment covering 343 to 361 (ATRDRANDFHKLKQSRFFD) has biased composition (basic and acidic residues). A Phosphoserine modification is found at Ser-365. Acidic residues predominate over residues 398-417 (YNEEEDGDGGEEDVQDDEER). The segment covering 425-435 (DYGKQRFSDVL) has biased composition (basic and acidic residues).

It belongs to the GOLM family.

It is found in the membrane. The protein is Protein GOLM2 of Mus musculus (Mouse).